The sequence spans 92 residues: Acylphosphatase (92 aa).

The Acylphosphatase-like domain occupies 5–92; that stretch reads RVHIIVSGLV…TSCREFRILT (88 aa). Residues Arg-20 and Asn-38 contribute to the active site.

This sequence belongs to the acylphosphatase family.

It catalyses the reaction an acyl phosphate + H2O = a carboxylate + phosphate + H(+). This is Acylphosphatase (acyP) from Chlorobaculum tepidum (strain ATCC 49652 / DSM 12025 / NBRC 103806 / TLS) (Chlorobium tepidum).